The chain runs to 769 residues: Probable protease Ga0334635_1659 (769 aa).

Positions 118-167 are disordered; it reads VARGSSDNNGAPPLSFTLSHGDPKSDPEPSSPSRLVNTGLSEAERPESPL.

Probably a dedicated protease for substrate gasdermin bGSDM; cleaves the bGSDM precursor, releasing the pore-forming moiety, which integrates into the membrane and triggers cell death. Involved in defense against bacteriophages. Expression of gasdermin bGSDM and this neighboring protease is toxic in E.coli. The sequence is that of Probable protease Ga0334635_1659 from Vitiosangium sp. (strain GDMCC 1.1324).